We begin with the raw amino-acid sequence, 117 residues long: Putative iron-sulfur cluster insertion protein ErpA (117 aa).

Iron-sulfur cluster is bound by residues Cys-45, Cys-109, and Cys-111.

This sequence belongs to the HesB/IscA family. In terms of assembly, homodimer. Iron-sulfur cluster serves as cofactor.

Functionally, required for insertion of 4Fe-4S clusters. The polypeptide is Putative iron-sulfur cluster insertion protein ErpA (Chromobacterium violaceum (strain ATCC 12472 / DSM 30191 / JCM 1249 / CCUG 213 / NBRC 12614 / NCIMB 9131 / NCTC 9757 / MK)).